A 259-amino-acid chain; its full sequence is Putative protein-disulfide oxidoreductase RBE_1288 (259 aa).

The signal sequence occupies residues 1–20 (MRNSFITLIFLLLLSGCSEE). The tract at residues 25–54 (VEQESSESITPAQASTSDENNNQTTETTTP) is disordered. Over residues 33 to 42 (ITPAQASTSD) the composition is skewed to polar residues. Residues 43–54 (ENNNQTTETTTP) are compositionally biased toward low complexity. The Thioredoxin domain maps to 47-251 (QTTETTTPAV…ISAAIDKAIE (205 aa)). Cysteine 104 and cysteine 107 are joined by a disulfide.

This sequence belongs to the thioredoxin family. DsbA subfamily.

It is found in the periplasm. Functionally, may be required for disulfide bond formation in some proteins. This Rickettsia bellii (strain RML369-C) protein is Putative protein-disulfide oxidoreductase RBE_1288.